The sequence spans 151 residues: uncharacterized protein (151 aa).

The protein to equivalent protein in phage 82.

This is an uncharacterized protein from Escherichia coli (strain K12).